The following is a 236-amino-acid chain: 7-cyano-7-deazaguanine synthase (236 aa).

Residue 7-17 coordinates ATP; it reads CSGGLDSVSLA. Residues Cys-185, Cys-193, Cys-196, and Cys-199 each coordinate Zn(2+).

It belongs to the QueC family. It depends on Zn(2+) as a cofactor.

The enzyme catalyses 7-carboxy-7-deazaguanine + NH4(+) + ATP = 7-cyano-7-deazaguanine + ADP + phosphate + H2O + H(+). Its pathway is purine metabolism; 7-cyano-7-deazaguanine biosynthesis. Catalyzes the ATP-dependent conversion of 7-carboxy-7-deazaguanine (CDG) to 7-cyano-7-deazaguanine (preQ(0)). The sequence is that of 7-cyano-7-deazaguanine synthase from Rhizobium etli (strain CIAT 652).